A 146-amino-acid chain; its full sequence is Putative pre-16S rRNA nuclease (146 aa).

This sequence belongs to the YqgF nuclease family.

It is found in the cytoplasm. In terms of biological role, could be a nuclease involved in processing of the 5'-end of pre-16S rRNA. This Dechloromonas aromatica (strain RCB) protein is Putative pre-16S rRNA nuclease.